Reading from the N-terminus, the 130-residue chain is Small ribosomal subunit protein uS8 (130 aa).

This sequence belongs to the universal ribosomal protein uS8 family. Part of the 30S ribosomal subunit.

Its function is as follows. One of the primary rRNA binding proteins, it binds directly to 16S rRNA central domain where it helps coordinate assembly of the platform of the 30S subunit. The protein is Small ribosomal subunit protein uS8 of Methanobrevibacter smithii (strain ATCC 35061 / DSM 861 / OCM 144 / PS).